The following is a 597-amino-acid chain: DNA primase (597 aa).

Cys-40, His-43, Cys-61, and Cys-64 together coordinate Zn(2+). The segment at 40-64 (CPFHGEKTPSFSVSPEKQIFHCFGC) adopts a CHC2-type zinc-finger fold. The region spanning 262-342 (QEALLVEGFA…RVKVASLPNG (81 aa)) is the Toprim domain. The Mg(2+) site is built by Glu-268, Asp-311, and Asp-313. A compositionally biased stretch (basic and acidic residues) spans 429 to 447 (LSRSQRERTKPREAPDGET). Residues 429 to 448 (LSRSQRERTKPREAPDGETA) are disordered.

This sequence belongs to the DnaG primase family. Monomer. Interacts with replicative helicase DnaB, as DnaB(6):DnaG(3). A stable complex DnaI(6):DnaB(6):DnaG(3) fragment can be isolated; DnaI and DnaG do not contact each other (DnaI in this complex is derived from B.subtilis). The cofactor is Zn(2+). Mg(2+) serves as cofactor.

The catalysed reaction is ssDNA + n NTP = ssDNA/pppN(pN)n-1 hybrid + (n-1) diphosphate.. RNA polymerase that catalyzes the synthesis of short RNA molecules used as primers for DNA polymerase during DNA replication. This chain is DNA primase, found in Geobacillus stearothermophilus (Bacillus stearothermophilus).